Reading from the N-terminus, the 1940-residue chain is Myosin-3 (1940 aa).

The Myosin N-terminal SH3-like domain maps to 33-82 (DAKTYCFVVDSKEEYAKGKIKSSQDGKVTVETEDNRTLVVKPEDVYAMNP). A Myosin motor domain is found at 86–779 (DRIEDMAMLT…LLGTLEEMRD (694 aa)). Lysine 130 bears the N6,N6,N6-trimethyllysine mark. An ATP-binding site is contributed by 179 to 186 (GESGAGKT). Actin-binding stretches follow at residues 656 to 678 (LNKL…IPNE) and 758 to 772 (KFGH…GLLG). Residues 782 to 811 (LAKLITRTQAVCRGFLMRVEFQKMVQRRES) form the IQ domain. A coiled-coil region spans residues 840–1933 (LLKSAETEKE…KTRDFTSSRM (1094 aa)).

The protein belongs to the TRAFAC class myosin-kinesin ATPase superfamily. Myosin family. Muscle myosin is a hexameric protein that consists of 2 heavy chain subunits (MHC), 2 alkali light chain subunits (MLC) and 2 regulatory light chain subunits (MLC-2). In terms of tissue distribution, expressed in fetal bone, thymus, placenta, heart, brain, and liver.

The protein localises to the cytoplasm. It is found in the myofibril. In terms of biological role, muscle contraction. In Homo sapiens (Human), this protein is Myosin-3 (MYH3).